The sequence spans 78 residues: Pro-glucagon (78 aa).

It belongs to the glucagon family.

The protein resides in the secreted. Plays a key role in glucose metabolism and homeostasis. Regulates blood glucose by increasing gluconeogenesis and decreasing glycolysis. The chain is Pro-glucagon (gcg) from Atractosteus spatula (Alligator gar).